The primary structure comprises 182 residues: MSKQLAAQVPAEPVVLGKMGSSYGIRGWLRVFSSTEDAESIFDYQPWFIQKAGQWQQVQLESWKHHNQDLIIKLKGVDDRDAANLLTNCEIVVDSSQLPALEEGDYYWKDLMGCQVVTAEGYDLGKVIDMMETGSNDVLVIKANLKDAFGIKERLVPFLYGQVIKKVDLATRTIEVDWDPGF.

The 81-residue stretch at 102–182 (EEGDYYWKDL…TIEVDWDPGF (81 aa)) folds into the PRC barrel domain.

Belongs to the RimM family. Binds ribosomal protein uS19.

The protein resides in the cytoplasm. Functionally, an accessory protein needed during the final step in the assembly of 30S ribosomal subunit, possibly for assembly of the head region. Essential for efficient processing of 16S rRNA. May be needed both before and after RbfA during the maturation of 16S rRNA. It has affinity for free ribosomal 30S subunits but not for 70S ribosomes. The protein is Ribosome maturation factor RimM of Salmonella gallinarum (strain 287/91 / NCTC 13346).